The sequence spans 452 residues: Exodeoxyribonuclease 7 large subunit (452 aa).

The protein belongs to the XseA family. Heterooligomer composed of large and small subunits.

It localises to the cytoplasm. It catalyses the reaction Exonucleolytic cleavage in either 5'- to 3'- or 3'- to 5'-direction to yield nucleoside 5'-phosphates.. Functionally, bidirectionally degrades single-stranded DNA into large acid-insoluble oligonucleotides, which are then degraded further into small acid-soluble oligonucleotides. This Bacillus thuringiensis (strain Al Hakam) protein is Exodeoxyribonuclease 7 large subunit.